Reading from the N-terminus, the 356-residue chain is 3-isopropylmalate dehydrogenase (356 aa).

Residue 73–86 (GTQYDGLPREKRPE) coordinates NAD(+). Positions 93, 103, 131, and 220 each coordinate substrate. Residues Asp-220, Asp-244, and Asp-248 each coordinate Mg(2+). Position 278 to 290 (278 to 290 (GSAPDIAGKGIAN)) interacts with NAD(+).

This sequence belongs to the isocitrate and isopropylmalate dehydrogenases family. LeuB type 1 subfamily. In terms of assembly, homodimer. Mg(2+) serves as cofactor. The cofactor is Mn(2+).

It localises to the cytoplasm. The catalysed reaction is (2R,3S)-3-isopropylmalate + NAD(+) = 4-methyl-2-oxopentanoate + CO2 + NADH. The protein operates within amino-acid biosynthesis; L-leucine biosynthesis; L-leucine from 3-methyl-2-oxobutanoate: step 3/4. Catalyzes the oxidation of 3-carboxy-2-hydroxy-4-methylpentanoate (3-isopropylmalate) to 3-carboxy-4-methyl-2-oxopentanoate. The product decarboxylates to 4-methyl-2 oxopentanoate. The polypeptide is 3-isopropylmalate dehydrogenase (Nitrosomonas europaea (strain ATCC 19718 / CIP 103999 / KCTC 2705 / NBRC 14298)).